The chain runs to 564 residues: Hsp70-Hsp90 organising protein (564 aa).

TPR repeat units follow at residues 7-40 (AQRL…DPLD), 42-74 (VLYS…KKDW), and 76-108 (KGYI…DPNN). A coiled-coil region spans residues 197–239 (EGNDAEERQRQQREEEERRKKKEEEERKKKEEEEMKKQNRTPE). Positions 199 to 247 (NDAEERQRQQREEEERRKKKEEEERKKKEEEEMKKQNRTPEQIQGDEHK) are disordered. Residues 201–233 (AEERQRQQREEEERRKKKEEEERKKKEEEEMKK) show a composition bias toward basic and acidic residues. TPR repeat units follow at residues 243–276 (GDEH…NPND), 278–310 (MYHY…RYNF), 318–351 (AKLY…DNNR), 378–411 (AEEH…NPND), 413–445 (KLYS…DPTF), and 446–479 (VKAY…DPNN). Positions 513–552 (DPEIQQIISDPQFQIILQKLNENPNSISEYIKDPKIFNGL) constitute an STI1 domain.

In terms of assembly, monomer. Homodimer. Forms a complex composed of HOP and chaperones HSP70 and HSP90; the interaction is stronger in the absence of ATP. Interacts (via TPR 1, 2, 3, 7, 8 and 9 repeats) with HSP70 (via C-terminus); the interaction is direct and is stronger in the absence of ATP. Interacts (via TPR 4, 5 and 6 repeats) with HSP90 (via C-terminus); the interaction is direct.

It is found in the cytoplasm. In terms of biological role, acts as a co-chaperone and mediates the association of the chaperones HSP70 and HSP90 probably facilitating substrate transfer from HSP70 to HSP90. Stimulates HSP70 ATPase activity and, in contrast, inhibits HSP90 ATPase activity. The chain is Hsp70-Hsp90 organising protein from Plasmodium falciparum (isolate 3D7).